Here is a 296-residue protein sequence, read N- to C-terminus: CDP-diacylglycerol--glycerol-3-phosphate 3-phosphatidyltransferase 1, chloroplastic/mitochondrial (296 aa).

The transit peptide at 1–39 (MLRSGLASLIVDVNLRRTLRPSPTFSFPAHLSRCIITSR) directs the protein to the chloroplast and mitochondrion. The span at 62–82 (FSSSSSSEQSRPTSSSRNSFS) shows a compositional bias: low complexity. Positions 62–103 (FSSSSSSEQSRPTSSSRNSFSGHGQLDSDDNSSPPPSQSSSK) are disordered. 5 helical membrane-spanning segments follow: residues 104-124 (VLTL…LLVA), 126-146 (FYVD…AAAI), 164-184 (FGAF…LILL), 189-209 (IQVA…IAII), and 261-281 (VGWL…LSVW).

It belongs to the CDP-alcohol phosphatidyltransferase class-I family. The cofactor is Mn(2+).

It is found in the plastid. Its subcellular location is the chloroplast membrane. The protein localises to the mitochondrion membrane. It carries out the reaction a CDP-1,2-diacyl-sn-glycerol + sn-glycerol 3-phosphate = a 1,2-diacyl-sn-glycero-3-phospho-(1'-sn-glycero-3'-phosphate) + CMP + H(+). Its pathway is phospholipid metabolism; phosphatidylglycerol biosynthesis; phosphatidylglycerol from CDP-diacylglycerol: step 1/2. In terms of biological role, catalyzes the committed step to the synthesis of the acidic phospholipids, including phosphatidylglycerol (PG). Transfers specifically a phosphatidyl group from CDP-diacylglycerol to glycerol-3-phosphate to form phosphatidylglycerophosphate. Cannot catalyze the phosphatidyl group transfer to inositol, serine, choline or phosphatidylglycerol. Possesses high activity with CDP-dipalmitoylglycerol and low activity with CDP-dioleoylglycerol. Essential for chloroplast differentiation and PG accumulation in thylakoids, an essential process for the assembly of antenna-reaction center complexes to optimize energy transfer from antenna pigments, and for subsequent photochemical efficiency of photosystem II (PSII). During cold acclimation (at 5 degrees Celsius), necessary for the photosystem I (PSI) photochemistry, including both reaction center and light-harvesting integrity. But dispensable in mitochondrion, being redundant with PGPS2 for the production of PG and its derivative cardiolipin (CL) in mitochondrial membranes. Together with PGPS2, required for the proper embryo development by providing PG accurate levels. The polypeptide is CDP-diacylglycerol--glycerol-3-phosphate 3-phosphatidyltransferase 1, chloroplastic/mitochondrial (Arabidopsis thaliana (Mouse-ear cress)).